We begin with the raw amino-acid sequence, 156 residues long: Ribonuclease H (156 aa).

An RNase H type-1 domain is found at Gln7 to Ile148. Positions 16, 54, 76, and 140 each coordinate Mg(2+).

This sequence belongs to the RNase H family. In terms of assembly, monomer. Mg(2+) serves as cofactor.

Its subcellular location is the cytoplasm. The enzyme catalyses Endonucleolytic cleavage to 5'-phosphomonoester.. Functionally, endonuclease that specifically degrades the RNA of RNA-DNA hybrids. The sequence is that of Ribonuclease H (rnhA) from Zymomonas mobilis subsp. mobilis (strain ATCC 31821 / ZM4 / CP4).